The primary structure comprises 364 residues: MSGPRAGFYRQELNKTVWEVPQRLQGLRPVGSGAYGSVCSAYDARLRQKVAVKKLSRPFQSLIHARRTYRELRLLKHLKHENVIGLLDVFTPATSIEDFSEVYLVTTLMGADLNNIVKCQALSDEHVQFLVYQLLRGLKYIHSAGIIHRDLKPSNVAVNEDCELRILDFGLARQADEEMTGYVATRWYRAPEIMLNWMHYNQTVDIWSVGCIMAELLQGKALFPGNDYIDQLKRIMEVVGTPSPEVLAKISSEHARTYIQSLPPMPQKDLSSVFHGANPLAIDLLGRMLVLDSDQRVSAAEALAHAYFSQYHDPDDEPEAEPYDESVEAKERTLEEWKELTYQEVLSFKPLEPSQLPGTHEIEQ.

In terms of domain architecture, Protein kinase spans leucine 24–phenylalanine 308. ATP-binding positions include valine 30–valine 38 and lysine 53. Glutamate 71 serves as a coordination point for nilotinib. The active-site Proton acceptor is aspartate 168. Phosphothreonine; by MAP2K3, MAP2K4 and MAP2K6 is present on threonine 180. A TXY motif is present at residues threonine 180–tyrosine 182. Tyrosine 182 is modified (phosphotyrosine; by MAP2K3, MAP2K4 and MAP2K6). The disordered stretch occupies residues histidine 312–glutamate 331. The span at proline 314–serine 326 shows a compositional bias: acidic residues. Tyrosine 323 is subject to Phosphotyrosine; by ZAP70.

Belongs to the protein kinase superfamily. CMGC Ser/Thr protein kinase family. MAP kinase subfamily. In terms of assembly, interacts with HDAC3 and DUSP16. Mg(2+) serves as cofactor. Post-translationally, dually phosphorylated on Thr-180 and Tyr-182 by MAP2K3/MKK3, MAP2K4/MKK4 and MAP2K6/MKK6, which activates the enzyme.

It localises to the cytoplasm. The protein localises to the nucleus. The enzyme catalyses L-seryl-[protein] + ATP = O-phospho-L-seryl-[protein] + ADP + H(+). It catalyses the reaction L-threonyl-[protein] + ATP = O-phospho-L-threonyl-[protein] + ADP + H(+). Its activity is regulated as follows. Activated by phosphorylation on threonine and tyrosine by MAP2K3/MKK3, MAP2K4/MKK4 and MAP2K6/MKK6. MAP2K3/MKK3 and MAP2K6/MKK6 are both essential for the activation of MAPK11 induced by environmental stress. HDAC3 interacts directly and selectively with MAPK11 to repress ATF2 transcriptional activity, and regulate TNF gene expression in LPS-stimulated cells. Inhibited by SB203580 and pyridinyl-imidazole related compounds. In terms of biological role, serine/threonine kinase which acts as an essential component of the MAP kinase signal transduction pathway. MAPK11 is one of the four p38 MAPKs which play an important role in the cascades of cellular responses evoked by extracellular stimuli such as pro-inflammatory cytokines or physical stress leading to direct activation of transcription factors. Accordingly, p38 MAPKs phosphorylate a broad range of proteins and it has been estimated that they may have approximately 200 to 300 substrates each. MAPK11 functions are mostly redundant with those of MAPK14. Some of the targets are downstream kinases which are activated through phosphorylation and further phosphorylate additional targets. RPS6KA5/MSK1 and RPS6KA4/MSK2 can directly phosphorylate and activate transcription factors such as CREB1, ATF1, the NF-kappa-B isoform RELA/NFKB3, STAT1 and STAT3, but can also phosphorylate histone H3 and the nucleosomal protein HMGN1. RPS6KA5/MSK1 and RPS6KA4/MSK2 play important roles in the rapid induction of immediate-early genes in response to stress or mitogenic stimuli, either by inducing chromatin remodeling or by recruiting the transcription machinery. On the other hand, two other kinase targets, MAPKAPK2/MK2 and MAPKAPK3/MK3, participate in the control of gene expression mostly at the post-transcriptional level, by phosphorylating ZFP36 (tristetraprolin) and ELAVL1, and by regulating EEF2K, which is important for the elongation of mRNA during translation. MKNK1/MNK1 and MKNK2/MNK2, two other kinases activated by p38 MAPKs, regulate protein synthesis by phosphorylating the initiation factor EIF4E2. In the cytoplasm, the p38 MAPK pathway is an important regulator of protein turnover. For example, CFLAR is an inhibitor of TNF-induced apoptosis whose proteasome-mediated degradation is regulated by p38 MAPK phosphorylation. Ectodomain shedding of transmembrane proteins is regulated by p38 MAPKs as well. In response to inflammatory stimuli, p38 MAPKs phosphorylate the membrane-associated metalloprotease ADAM17. Such phosphorylation is required for ADAM17-mediated ectodomain shedding of TGF-alpha family ligands, which results in the activation of EGFR signaling and cell proliferation. Additional examples of p38 MAPK substrates are the FGFR1. FGFR1 can be translocated from the extracellular space into the cytosol and nucleus of target cells, and regulates processes such as rRNA synthesis and cell growth. FGFR1 translocation requires p38 MAPK activation. In the nucleus, many transcription factors are phosphorylated and activated by p38 MAPKs in response to different stimuli. Classical examples include ATF1, ATF2, ATF6, ELK1, PTPRH, DDIT3, TP53/p53 and MEF2C and MEF2A. The p38 MAPKs are emerging as important modulators of gene expression by regulating chromatin modifiers and remodelers. The promoters of several genes involved in the inflammatory response, such as IL6, IL8 and IL12B, display a p38 MAPK-dependent enrichment of histone H3 phosphorylation on 'Ser-10' (H3S10ph) in LPS-stimulated myeloid cells. This phosphorylation enhances the accessibility of the cryptic NF-kappa-B-binding sites marking promoters for increased NF-kappa-B recruitment. Phosphorylates methyltransferase DOT1L on 'Ser-834', 'Thr-900', 'Ser-902', 'Thr-984', 'Ser-1001', 'Ser-1009' and 'Ser-1104'. This Mus musculus (Mouse) protein is Mitogen-activated protein kinase 11 (Mapk11).